The chain runs to 479 residues: Glycogen synthase (479 aa).

Residue Lys-15 coordinates ADP-alpha-D-glucose.

Belongs to the glycosyltransferase 1 family. Bacterial/plant glycogen synthase subfamily.

It carries out the reaction [(1-&gt;4)-alpha-D-glucosyl](n) + ADP-alpha-D-glucose = [(1-&gt;4)-alpha-D-glucosyl](n+1) + ADP + H(+). It participates in glycan biosynthesis; glycogen biosynthesis. Functionally, synthesizes alpha-1,4-glucan chains using ADP-glucose. This is Glycogen synthase from Clostridium novyi (strain NT).